The sequence spans 103 residues: Large ribosomal subunit protein eL30 (103 aa).

The protein belongs to the eukaryotic ribosomal protein eL30 family.

In Methanothrix thermoacetophila (strain DSM 6194 / JCM 14653 / NBRC 101360 / PT) (Methanosaeta thermophila), this protein is Large ribosomal subunit protein eL30.